The following is a 288-amino-acid chain: 4-diphosphocytidyl-2-C-methyl-D-erythritol kinase (288 aa).

Residue lysine 19 is part of the active site. 102-112 (PMGGGIGGGSS) contacts ATP. The active site involves aspartate 144.

Belongs to the GHMP kinase family. IspE subfamily.

The enzyme catalyses 4-CDP-2-C-methyl-D-erythritol + ATP = 4-CDP-2-C-methyl-D-erythritol 2-phosphate + ADP + H(+). The protein operates within isoprenoid biosynthesis; isopentenyl diphosphate biosynthesis via DXP pathway; isopentenyl diphosphate from 1-deoxy-D-xylulose 5-phosphate: step 3/6. Its function is as follows. Catalyzes the phosphorylation of the position 2 hydroxy group of 4-diphosphocytidyl-2C-methyl-D-erythritol. The polypeptide is 4-diphosphocytidyl-2-C-methyl-D-erythritol kinase (Pseudomonas savastanoi pv. phaseolicola (strain 1448A / Race 6) (Pseudomonas syringae pv. phaseolicola (strain 1448A / Race 6))).